The primary structure comprises 265 residues: Orotidine 5'-phosphate decarboxylase (265 aa).

Residues Asp-38, 60–62 (KTH), 91–100 (DRKFADIGNT), Tyr-213, and Arg-232 contribute to the substrate site. Catalysis depends on Lys-93, which acts as the Proton donor.

Belongs to the OMP decarboxylase family.

The catalysed reaction is orotidine 5'-phosphate + H(+) = UMP + CO2. Its pathway is pyrimidine metabolism; UMP biosynthesis via de novo pathway; UMP from orotate: step 2/2. The sequence is that of Orotidine 5'-phosphate decarboxylase (pyrG) from Mucor circinelloides f. lusitanicus (Mucor racemosus var. lusitanicus).